A 342-amino-acid polypeptide reads, in one-letter code: MRTNKVIHVIGVHAEGEVGDVIVGGVSPPPGDTLWEQSRFIASDETLRNFVLNEPRGGVFRHVNLLVPPKDPRAQMGFIIMEPADTPPMSGSNSICVSTAILDSGIISMQEPLTHMVLEAPGGVIEVTAECANGKAERINVLNVASFVTRLAAALEVEGLGTLTVDTAYGGDSFVIVDAIGLGFSLKPDEARELAELGMKITAAANEQLGFVHPCNADWNHISFCQMTTPITRENGILTGKSAVAIRPGKIDRSPTGTGCSARLAVMHARGEIGIGETYIGRSIIDSEFKCHIDSLTEIGGLSAIRPVISGRAWITGVSQLMLDPTDPWPSGYQLSDTWPAI.

The active-site Proton acceptor is the S90. Residues 91–92 (GS), D252, and 257–258 (GT) each bind substrate.

It belongs to the proline racemase family.

It catalyses the reaction trans-3-hydroxy-L-proline = 1-pyrroline-2-carboxylate + H2O. Catalyzes the dehydration of trans-3-hydroxy-L-proline (t3LHyp) to Delta(1)-pyrroline-2-carboxylate (Pyr2C). Is likely involved in a degradation pathway that converts t3LHyp to L-proline. Displays neither proline racemase activity nor 4-hydroxyproline 2-epimerase activity. This Allorhizobium ampelinum (strain ATCC BAA-846 / DSM 112012 / S4) (Agrobacterium vitis (strain S4)) protein is Trans-3-hydroxy-L-proline dehydratase.